The following is a 428-amino-acid chain: Adenylosuccinate synthetase (428 aa).

GTP contacts are provided by residues 12–18 and 40–42; these read GDEGKGK and GHT. The active-site Proton acceptor is the Asp13. Mg(2+)-binding residues include Asp13 and Gly40. IMP-binding positions include 13-16, 38-41, Thr130, Arg144, Gln225, Thr240, and Arg304; these read DEGK and NAGH. Residue His41 is the Proton donor of the active site. Position 300 to 306 (300 to 306) interacts with substrate; that stretch reads VTTGRAR. GTP is bound by residues Arg306, 332 to 334, and 414 to 416; these read KID and SVG.

The protein belongs to the adenylosuccinate synthetase family. As to quaternary structure, homodimer. The cofactor is Mg(2+).

The protein localises to the cytoplasm. The enzyme catalyses IMP + L-aspartate + GTP = N(6)-(1,2-dicarboxyethyl)-AMP + GDP + phosphate + 2 H(+). It participates in purine metabolism; AMP biosynthesis via de novo pathway; AMP from IMP: step 1/2. Its function is as follows. Plays an important role in the de novo pathway of purine nucleotide biosynthesis. Catalyzes the first committed step in the biosynthesis of AMP from IMP. This chain is Adenylosuccinate synthetase, found in Clostridium botulinum (strain Loch Maree / Type A3).